Consider the following 443-residue polypeptide: Exodeoxyribonuclease 7 large subunit (443 aa).

It belongs to the XseA family. Heterooligomer composed of large and small subunits.

The protein resides in the cytoplasm. It carries out the reaction Exonucleolytic cleavage in either 5'- to 3'- or 3'- to 5'-direction to yield nucleoside 5'-phosphates.. Bidirectionally degrades single-stranded DNA into large acid-insoluble oligonucleotides, which are then degraded further into small acid-soluble oligonucleotides. This chain is Exodeoxyribonuclease 7 large subunit, found in Legionella pneumophila (strain Paris).